Here is a 146-residue protein sequence, read N- to C-terminus: Universal stress protein MT1672 (146 aa).

Belongs to the universal stress protein A family.

The sequence is that of Universal stress protein MT1672 from Mycobacterium tuberculosis (strain CDC 1551 / Oshkosh).